The sequence spans 778 residues: uncharacterized protein (778 aa).

The region spanning 1 to 92 is the PE domain; sequence MSFVIAVPEA…GARSYVVAEA (92 aa). Disordered regions lie at residues 125–163, 372–510, and 718–778; these read ADGT…AGLI, TGLA…GDAF, and QGGL…GADG. Composition is skewed to gly residues over residues 402–429, 436–510, and 718–763; these read NQTG…GGLG, DGTG…GDAF, and QGGL…GSSG.

It belongs to the mycobacterial PE family. PGRS subfamily.

This is an uncharacterized protein from Mycobacterium tuberculosis (strain CDC 1551 / Oshkosh).